Reading from the N-terminus, the 117-residue chain is Ig heavy chain V region 23 (117 aa).

The first 19 residues, 1 to 19, serve as a signal peptide directing secretion; that stretch reads MGWSCIILFLVAAANGVHS. Positions 20-49 are framework-1; that stretch reads QVQLQQPGTELVKPGASVKLSCKASGYTFT. Cysteine 41 and cysteine 115 form a disulfide bridge. Positions 50–54 are complementarity-determining-1; the sequence is SYWMH. The tract at residues 55–68 is framework-2; that stretch reads WVKQRPGQGLEWIG. Residues 69–85 are complementarity-determining-2; the sequence is NINPGNGGTNYNEKFKS. The tract at residues 86-117 is framework-3; the sequence is KVTLTVDKSSSTAYTQLSSLTSEDSAVYYCAR.

The sequence is that of Ig heavy chain V region 23 from Mus musculus (Mouse).